Here is a 307-residue protein sequence, read N- to C-terminus: Small ribosomal subunit biogenesis GTPase RsgA (307 aa).

Residues 80-237 (KVDLRQAIVS…IVDTPGIKEF (158 aa)) form the CP-type G domain. GTP contacts are provided by residues 129–132 (NKID) and 180–188 (GQSGVGKSS). Positions 261, 266, 268, and 274 each coordinate Zn(2+).

This sequence belongs to the TRAFAC class YlqF/YawG GTPase family. RsgA subfamily. As to quaternary structure, monomer. Associates with 30S ribosomal subunit, binds 16S rRNA. Zn(2+) is required as a cofactor.

It localises to the cytoplasm. Functionally, one of several proteins that assist in the late maturation steps of the functional core of the 30S ribosomal subunit. Helps release RbfA from mature subunits. May play a role in the assembly of ribosomal proteins into the subunit. Circularly permuted GTPase that catalyzes slow GTP hydrolysis, GTPase activity is stimulated by the 30S ribosomal subunit. This chain is Small ribosomal subunit biogenesis GTPase RsgA, found in Borrelia garinii subsp. bavariensis (strain ATCC BAA-2496 / DSM 23469 / PBi) (Borreliella bavariensis).